We begin with the raw amino-acid sequence, 453 residues long: uncharacterized protein (453 aa).

The protein to S.faecalis plasmid PAM373 EP0012.

This is an uncharacterized protein from Listeria innocua serovar 6a (strain ATCC BAA-680 / CLIP 11262).